We begin with the raw amino-acid sequence, 561 residues long: DNA ligase (561 aa).

E247 is a binding site for ATP. K249 acts as the N6-AMP-lysine intermediate in catalysis. R254, R269, E299, F339, R414, and K420 together coordinate ATP.

This sequence belongs to the ATP-dependent DNA ligase family. Monomer. The cofactor is Mg(2+).

The catalysed reaction is ATP + (deoxyribonucleotide)n-3'-hydroxyl + 5'-phospho-(deoxyribonucleotide)m = (deoxyribonucleotide)n+m + AMP + diphosphate.. DNA ligase that seals nicks in double-stranded DNA during DNA replication, DNA recombination and DNA repair. The sequence is that of DNA ligase from Pyrococcus furiosus (strain ATCC 43587 / DSM 3638 / JCM 8422 / Vc1).